Reading from the N-terminus, the 104-residue chain is Large ribosomal subunit protein bL21 (104 aa).

Belongs to the bacterial ribosomal protein bL21 family. In terms of assembly, part of the 50S ribosomal subunit. Contacts protein L20.

Its function is as follows. This protein binds to 23S rRNA in the presence of protein L20. This is Large ribosomal subunit protein bL21 from Thermotoga sp. (strain RQ2).